Reading from the N-terminus, the 784-residue chain is Ribosome biogenesis protein BOP1 homolog (784 aa).

A compositionally biased stretch (basic residues) spans 1 to 11 (MTKKLALKRRG). Residues 1–159 (MTKKLALKRR…DSDTSDEEDI (159 aa)) form a disordered region. Composition is skewed to acidic residues over residues 27-36 (SENEEEEEDL), 45-54 (EDSTDDEGID), 62-73 (SEELQFESDEEG), and 84-111 (AEEDEESSDEEDNEEEGSTDEEEVEDEE). 2 stretches are compositionally biased toward basic and acidic residues: residues 112 to 123 (KVSKSKQSDDKP) and 138 to 148 (LPKRDSSKPEY). Positions 149–158 (QDSDTSDEED) are enriched in acidic residues. WD repeat units lie at residues 445–486 (GHTD…RTIE), 488–526 (DEVVRCVAWCPNPKLSIIAVATGNRLLLVNPKVGDKVLV), 570–612 (THFK…SQIP), 615–653 (KSKGLIQFVLFHPVKPCFFVATQHNIRIYDLVKQELVKK), 656–695 (TNSKWISGMSIHPKGDNLLVSTYDKKMLWFDLDLSTKPYQ), 699–738 (LHRNAVRSVAFHRRYPLFASGSDDQAVIVSHGMVYNDLLQ), and 754–784 (RDEFGVLDVNWHPVQPWVFSTGADSTIRLYT).

Belongs to the WD repeat BOP1/ERB1 family.

Its subcellular location is the nucleus. It is found in the nucleolus. It localises to the nucleoplasm. Its function is as follows. Required for maturation of ribosomal RNAs and formation of the large ribosomal subunit. The sequence is that of Ribosome biogenesis protein BOP1 homolog from Drosophila sechellia (Fruit fly).